We begin with the raw amino-acid sequence, 215 residues long: Adenylate kinase (215 aa).

Position 10-15 (10-15 (GAGKGT)) interacts with ATP. The tract at residues 30-59 (STGDMLRAAVKAGTELGLIAKSVMDSGGLV) is NMP. Residues Thr-31, Arg-36, 57–59 (GLV), 85–88 (GFPR), and Gln-92 contribute to the AMP site. The tract at residues 122 to 159 (GRRVHEASGRVYHTVYNPPKVEGKDDVTGDDLVQRKDD) is LID. ATP is bound by residues Arg-123 and 132-133 (VY). Residues Arg-156 and Arg-167 each coordinate AMP. An ATP-binding site is contributed by Gly-201.

The protein belongs to the adenylate kinase family. Monomer.

Its subcellular location is the cytoplasm. It carries out the reaction AMP + ATP = 2 ADP. The protein operates within purine metabolism; AMP biosynthesis via salvage pathway; AMP from ADP: step 1/1. Its function is as follows. Catalyzes the reversible transfer of the terminal phosphate group between ATP and AMP. Plays an important role in cellular energy homeostasis and in adenine nucleotide metabolism. The sequence is that of Adenylate kinase from Pseudomonas fluorescens (strain SBW25).